Here is a 457-residue protein sequence, read N- to C-terminus: Nuclear hormone receptor family member odr-7 (457 aa).

Disordered stretches follow at residues 57 to 95 (EQPN…DNDA) and 230 to 252 (KQES…LQQP). The nuclear receptor DNA-binding region spans 327 to 407 (LHDCQVCLST…IGMLPENVQH (81 aa)). NR C4-type zinc fingers lie at residues 330-351 (CQVC…CAAC) and 367-395 (CKRN…MKRC). The tract at residues 435-457 (QPSGSAAQPITVSSSESPRHTTN) is disordered.

The protein belongs to the nuclear hormone receptor family. NR0 subfamily. In terms of assembly, heterodimer with a partner that confers DNA binding capacity or a nuclear hormone receptor whose DNA binding it inhibits. Expressed predominantly in the AWA neurons.

Its subcellular location is the nucleus. It localises to the cytoplasm. The protein localises to the perinuclear region. Required for the function of one pair of chemosensory neurons called AWA neurons that are involved in chemotaxis to volatile odorants. Acts in a pathway that specifies olfactory neuronal fate. Regulates the transcription of olfactory signaling molecules such as odr-10 that specify AWA neuron identity and function. Represses the expression in AWA neurons of factors such as str-2 which specify AWC neuron identity. The chain is Nuclear hormone receptor family member odr-7 (odr-7) from Caenorhabditis elegans.